Consider the following 867-residue polypeptide: GATOR2 complex protein Mio (867 aa).

WD repeat units follow at residues alanine 51 to asparagine 86, arginine 100 to threonine 144, glycine 149 to glutamine 188, isoleucine 190 to arginine 228, and glutamine 231 to serine 272. Residues proline 350–serine 376 are compositionally biased toward low complexity. The interval proline 350–aspartate 378 is disordered. Residues leucine 739 to proline 777 form a C4-type zinc finger. Zn(2+)-binding residues include cysteine 741, cysteine 744, cysteine 771, cysteine 774, cysteine 784, cysteine 821, cysteine 824, histidine 826, histidine 829, histidine 832, cysteine 843, cysteine 848, and cysteine 852. The RING-type; atypical zinc finger occupies leucine 778–glycine 857.

This sequence belongs to the WD repeat mio family. As to quaternary structure, component of the GATOR complex consisting of mio, Nup44A/Seh1, Im11, Nplr3, Nplr2, Wdr24, Wdr59 and Sec13. Within the GATOR complex, probable component of the GATOR2 subcomplex which is likely composed of mio, Nup44A/Seh1, Wdr24, Wdr59 and Sec13. Interacts with Wdr24. Interacts with nucleoporin Nup44A/Seh1. The GATOR2 complex associates with unmet in the absence of S-adenosyl-L-methionine; the mio-Wdr24-Nup44A subcomplex is essential and sufficient for this interaction while Wdr59 and Sec13 are dispensable. This association acts as a nutrient sensor to inhibit mTORC1 signaling in the absence of methionine. In terms of tissue distribution, present in the oocyte.

It localises to the nucleus. Its subcellular location is the lysosome. In terms of biological role, an essential component of the GATOR subcomplex GATOR2 which functions as an activator of the amino acid-sensing branch of the mTORC1 signaling pathway. The two GATOR subcomplexes, GATOR1 and GATOR2, regulate the mTORC1 pathway in order to mediate metabolic homeostasis, female gametogenesis and the response to amino acid limitation and complete starvation. GATOR2 activates the mTORC1 signaling pathway through the inhibition of the GATOR1 subcomplex, controlling the switch to cell proliferation and growth under nutrient replete conditions and during female oocyte development. This component is required for activating mTORC1 specifically in germline cells to promote cell growth and maintain the oocyte fate. GATOR1 and GATOR2 act at different stages of oogenesis to regulate mTORC1 in order to control meiotic entry and promote oocyte growth and development. After exactly four mitotic cyst divisions, the GATOR1 complex members (Iml1, Nprl2 and Nprl3) down-regulate mTORC1 to slow cellular metabolism and promote the mitotic/meiotic transition. At later stages of oogenesis, the mio and Nup44A components of the GATOR2 complex inhibit GATOR1 and thus activate mTORC1 to promote meiotic progression, and drive oocyte growth and development. In addition to its role in the regulation of the mTORC1 complex, functions independently of mTORC1 to prevent the inappropriate accumulation of autolysosomes in germline tissues. This Drosophila melanogaster (Fruit fly) protein is GATOR2 complex protein Mio.